The chain runs to 373 residues: 4-hydroxy-3-methylbut-2-en-1-yl diphosphate synthase (flavodoxin) (373 aa).

[4Fe-4S] cluster-binding residues include cysteine 270, cysteine 273, cysteine 305, and glutamate 312.

It belongs to the IspG family. Requires [4Fe-4S] cluster as cofactor.

The enzyme catalyses (2E)-4-hydroxy-3-methylbut-2-enyl diphosphate + oxidized [flavodoxin] + H2O + 2 H(+) = 2-C-methyl-D-erythritol 2,4-cyclic diphosphate + reduced [flavodoxin]. It participates in isoprenoid biosynthesis; isopentenyl diphosphate biosynthesis via DXP pathway; isopentenyl diphosphate from 1-deoxy-D-xylulose 5-phosphate: step 5/6. In terms of biological role, converts 2C-methyl-D-erythritol 2,4-cyclodiphosphate (ME-2,4cPP) into 1-hydroxy-2-methyl-2-(E)-butenyl 4-diphosphate. In Photorhabdus laumondii subsp. laumondii (strain DSM 15139 / CIP 105565 / TT01) (Photorhabdus luminescens subsp. laumondii), this protein is 4-hydroxy-3-methylbut-2-en-1-yl diphosphate synthase (flavodoxin).